Here is a 498-residue protein sequence, read N- to C-terminus: Neuronal acetylcholine receptor subunit beta-4 (498 aa).

The first 21 residues, 1–21 (MRRAPSLVLFFLVALCGRGNC), serve as a signal peptide directing secretion. Residues 22-239 (RVANAEEKLM…RKPLFYTINL (218 aa)) are Extracellular-facing. Asn-36, Asn-93, Asn-138, and Asn-166 each carry an N-linked (GlcNAc...) asparagine glycan. An intrachain disulfide couples Cys-153 to Cys-167. Residues 240–255 (IIPCVLTTLLAILVFY) traverse the membrane as a helical segment. Residues 256–261 (LPSDCG) are Cytoplasmic-facing. Residue Glu-262 coordinates Na(+). A helical membrane pass occupies residues 262–277 (EKMTLCISVLLALTFF). Topologically, residues 278–296 (LLLISKIVPPTSLDVPLIG) are extracellular. A helical transmembrane segment spans residues 297 to 321 (KYLMFTMVLVTFSIVTSVCVLNVHH). Over 322-454 (RSPSTHTMAP…QSVVEDWKYV (133 aa)) the chain is Cytoplasmic. Residues 357 to 377 (ARAFPPSKSCVTKPEATATST) are disordered. Residues 455–478 (AMVVDRLFLWVFMFVCVLGTVGLF) form a helical membrane-spanning segment. Residues 479 to 498 (LPPLFQTHAASEGPYAAQRD) lie on the Extracellular side of the membrane.

Belongs to the ligand-gated ion channel (TC 1.A.9) family. Acetylcholine receptor (TC 1.A.9.1) subfamily. Beta-4/CHRNB4 sub-subfamily. As to quaternary structure, neuronal AChR is composed of two different types of subunits: alpha and beta. CHRNB4/Beta-4 subunit can be combined to CHRNA2/alpha-2, CHRNA3/alpha-3 or CHRNA4/alpha-4, CHRNA5/alpha-5 and CHRNB3/beta-3 to give rise to functional receptors. Forms stoichiometries such as (CHRNA3)2:(CHRNB4)3 or (CHRNA3:CHRNB4)2:CHRNB3. Interacts with RIC3; which is required for proper folding and assembly. Interacts with LYPD6.

Its subcellular location is the synaptic cell membrane. The protein localises to the cell membrane. The enzyme catalyses Ca(2+)(in) = Ca(2+)(out). It carries out the reaction K(+)(in) = K(+)(out). The catalysed reaction is Na(+)(in) = Na(+)(out). With respect to regulation, activated by a myriad of ligands such as acetylcholine, cytisine, nicotine, choline and epibatidine. The heteropentamer CHRNA3:CHRNB4 activity is blocked by the alpha-conotoxin ImI and AuIB. Functionally, component of neuronal acetylcholine receptors (nAChRs) that function as pentameric, ligand-gated cation channels with high calcium permeability among other activities. nAChRs are excitatory neurotrasnmitter receptors formed by a collection of nAChR subunits known to mediate synaptic transmission in the nervous system and the neuromuscular junction. Each nAchR subunit confers differential attributes to channel properties, including activation, deactivation and desensitization kinetics, pH sensitivity, cation permeability, and binding to allosteric modulators. CHRNB4 forms heteropentameric neuronal acetylcholine receptors with CHRNA2, CHRNA3 and CHRNA4, as well as CHRNA5 and CHRNB3 as accesory subunits. CHRNA3:CHRNB4 being predominant in neurons of the autonomic ganglia, it is known as ganglionic nicotinic receptor. CHRNA3:CHRNB4 or CHRNA3:CHRNA5:CHRNB4 play also an important role in the habenulo-interpeduncular tract, modulating the mesolimbic dopamine system and affecting reward circuits and addiction. Hypothalamic CHRNA3:CHRNB4 nAChR activation by nicotine leads to activation of POMC neurons and a decrease in food intake. The chain is Neuronal acetylcholine receptor subunit beta-4 from Homo sapiens (Human).